The primary structure comprises 354 residues: Histidinol-phosphate aminotransferase (354 aa).

Residue Lys-210 is modified to N6-(pyridoxal phosphate)lysine.

This sequence belongs to the class-II pyridoxal-phosphate-dependent aminotransferase family. Histidinol-phosphate aminotransferase subfamily. In terms of assembly, homodimer. Requires pyridoxal 5'-phosphate as cofactor.

It carries out the reaction L-histidinol phosphate + 2-oxoglutarate = 3-(imidazol-4-yl)-2-oxopropyl phosphate + L-glutamate. It functions in the pathway amino-acid biosynthesis; L-histidine biosynthesis; L-histidine from 5-phospho-alpha-D-ribose 1-diphosphate: step 7/9. This chain is Histidinol-phosphate aminotransferase, found in Clostridium botulinum (strain 657 / Type Ba4).